We begin with the raw amino-acid sequence, 120 residues long: YNHSHIHTQYFVTYVSFLLLFTSTSLNSPYLSSPVISTGQHIDVGDEDYHDGDDDVDYTDDVDDVDDPHGSPSQLLQGGYQRNRHYGGGTYHSGYYRPNKQHGNGYGGQYPKKYGSGYKH.

Residues 41-120 are disordered; it reads HIDVGDEDYH…PKKYGSGYKH (80 aa). Residues 45–66 are compositionally biased toward acidic residues; sequence GDEDYHDGDDDVDYTDDVDDVD.

The protein belongs to the immunogenic miracidial antigen family.

In Schistosoma japonicum (Blood fluke), this protein is Immunogenic miracidial antigen 5D (5D).